The primary structure comprises 428 residues: Enolase (428 aa).

A (2R)-2-phosphoglycerate-binding site is contributed by Q163. Residue E205 is the Proton donor of the active site. Mg(2+)-binding residues include D242, E285, and D312. (2R)-2-phosphoglycerate contacts are provided by K337, R366, S367, and K388. Residue K337 is the Proton acceptor of the active site.

Belongs to the enolase family. Requires Mg(2+) as cofactor.

It localises to the cytoplasm. The protein resides in the secreted. The protein localises to the cell surface. The enzyme catalyses (2R)-2-phosphoglycerate = phosphoenolpyruvate + H2O. Its pathway is carbohydrate degradation; glycolysis; pyruvate from D-glyceraldehyde 3-phosphate: step 4/5. In terms of biological role, catalyzes the reversible conversion of 2-phosphoglycerate (2-PG) into phosphoenolpyruvate (PEP). It is essential for the degradation of carbohydrates via glycolysis. The chain is Enolase from Rhodopirellula baltica (strain DSM 10527 / NCIMB 13988 / SH1).